The primary structure comprises 214 residues: 3,4-dihydroxy-2-butanone 4-phosphate synthase (214 aa).

D-ribulose 5-phosphate-binding positions include 37-38 (RE), Asp42, 150-154 (RRGHT), and Glu174. Residue Glu38 participates in Mg(2+) binding. His153 is a binding site for Mg(2+).

It belongs to the DHBP synthase family. In terms of assembly, homodimer. The cofactor is Mg(2+). Mn(2+) serves as cofactor.

It carries out the reaction D-ribulose 5-phosphate = (2S)-2-hydroxy-3-oxobutyl phosphate + formate + H(+). The protein operates within cofactor biosynthesis; riboflavin biosynthesis; 2-hydroxy-3-oxobutyl phosphate from D-ribulose 5-phosphate: step 1/1. Its function is as follows. Catalyzes the conversion of D-ribulose 5-phosphate to formate and 3,4-dihydroxy-2-butanone 4-phosphate. The sequence is that of 3,4-dihydroxy-2-butanone 4-phosphate synthase from Pasteurella multocida (strain Pm70).